The primary structure comprises 369 residues: CLIP domain-containing serine protease HP8 (369 aa).

The N-terminal stretch at 1–24 (MKTPFEKIRIISCILVIVSTNVVG) is a signal peptide. The propeptide occupies 25-81 (QKCNGGANCIPLEECTDLFQQLKQGNSPQLTRLLRGLHCGFEDLNSPKICCPPEFLA). One can recognise a Clip domain in the interval 26–75 (KCNGGANCIPLEECTDLFQQLKQGNSPQLTRLLRGLHCGFEDLNSPKICC). Cystine bridges form between Cys27-Cys74, Cys33-Cys63, Cys39-Cys75, Cys105-Cys239, Cys142-Cys158, Cys186-Cys191, Cys286-Cys303, and Cys313-Cys344. The Peptidase S1 domain occupies 113-368 (IFGGIQTEID…FMDWILSKLE (256 aa)). Residue His157 is the Charge relay system of the active site. Ca(2+) is bound by residues Glu177, Asn179, Thr182, and Asp185. The N-linked (GlcNAc...) asparagine glycan is linked to Asn179. Asp219 serves as the catalytic Charge relay system. Residue Ser317 is the Charge relay system of the active site.

Belongs to the peptidase S1 family. CLIP subfamily. In terms of assembly, in the active form, heterodimer of a light chain and a heavy chain; disulfide-linked. Post-translationally, proteolytically cleaved for activation. Cleavage produces a light chain and a catalytic heavy chain which remains covalently associated probably through an interchain disulfide bond. In terms of tissue distribution, in larvae, expressed in the fat body and hemocytes.

The protein localises to the secreted. It is found in the cytoplasm. Inhibited by (p-amidinophenyl) methanesulfonyl fluoride, p-nitrophenyl-p'-guanidinobenzoate, D-phenylalanyl-L-prolyl-L-arginyl chloromethane, leupeptin, antipain and to a lesser extent by antithrombin III. Its function is as follows. Endopeptidase with selective post-Arg cleavage site. Functions in the innate immune response to fungal and Gram-positive bacterial infections. Upon pathogen infection promotes nodulation; a cellular defense response in which hemocytes surround and isolate invading pathogens forming aggregates called nodules. Involved in activating nodule formation in response to infection with M.luteus, E.coli or S.cerevisiae. Able to bind the microbes M.luteus, E.coli or S.cerevisiae. According to another report, does not bind microorganisms. This chain is CLIP domain-containing serine protease HP8, found in Bombyx mori (Silk moth).